The primary structure comprises 219 residues: MGQKTNPNGLRFGKFKKHFSCWYTENKNYSHFVKQDIFIRKFLMEKIKNVFISLIEIEKDNKETVIFIHYLNFSKFNKVETNSEKNEINLFKLKNLLLKSLNSFFNVKINFNEFIIKLIEIENPILDVRFIANDIRYKLEKRMNFRKIVNSTIANIINKGIKGIKIKLSGRLNDAEMAREESFREGKVPLNTLKANIDYFHCTAKTLSGSLGIKVWLNK.

Residues 39–111 (IRKFLMEKIK…NSFFNVKINF (73 aa)) enclose the KH type-2 domain.

It belongs to the universal ribosomal protein uS3 family. In terms of assembly, part of the 30S ribosomal subunit.

It is found in the plastid. The polypeptide is Small ribosomal subunit protein uS3c (rps3) (Euglena longa (Euglenophycean alga)).